The chain runs to 601 residues: Nuclear envelope protein ndc1 (601 aa).

The Cytoplasmic segment spans residues 1 to 34 (MVMLRTSFPSGSRTKAVRYHTLLRPILQQRFLRA). Residues 35–55 (CFALLCLCCITSYWFSSGPFI) traverse the membrane as a helical segment. Residues 56–58 (SLS) lie on the Perinuclear space side of the membrane. A helical transmembrane segment spans residues 59 to 79 (FWFLSLVRGFVCFFFMFPYFV). Residues 80–106 (MLKSRMSTQKVTKQSLGAQLFYDFSPK) are Cytoplasmic-facing. A helical transmembrane segment spans residues 107–127 (SFFLVYLTFAVSVSCLCLFYI). The Perinuclear space portion of the chain corresponds to 128 to 153 (KGHASSIRLQWIASPNAYELPSLNER). Residues 154–174 (FVYMTYFSHILILALTVEHLY) form a helical membrane-spanning segment. At 175-182 (LQRDSPSR) the chain is on the cytoplasmic side. Residues 183-203 (PVINVSFFNYIFQNLGWLIRF) form a helical membrane-spanning segment. The Perinuclear space segment spans residues 204–256 (SFRKSIICCLFTPFSYAILRSYIWRFAALLTSCCRRIAYTKTPPKWPLSLRLL). A helical membrane pass occupies residues 257-277 (LHSFWMAFIVCLTFQIALLIF). The Cytoplasmic portion of the chain corresponds to 278-601 (RVFLYSGPMI…VLFREYKSNS (324 aa)).

This sequence belongs to the NDC1 family. In terms of assembly, component of the nuclear pore complex (NPC). NPC constitutes the exclusive means of nucleocytoplasmic transport. NPCs allow the passive diffusion of ions and small molecules and the active, nuclear transport receptor-mediated bidirectional transport of macromolecules such as proteins, RNAs, ribonucleoparticles (RNPs), and ribosomal subunits across the nuclear envelope. Due to its 8-fold rotational symmetry, all subunits are present with 8 copies or multiples thereof.

The protein localises to the nucleus. Its subcellular location is the nuclear pore complex. The protein resides in the nucleus membrane. It localises to the cytoplasm. It is found in the cytoskeleton. The protein localises to the microtubule organizing center. Its subcellular location is the spindle pole body. Component of the nuclear pore complex (NPC) and the spindle pole body (SPB), which plays a key role in de novo assembly and insertion of both structures in the nuclear envelope. Involved in the formation of the bipolar mitotic spindle. Anchors the spindle pole body in the nuclear envelope. This Schizosaccharomyces pombe (strain 972 / ATCC 24843) (Fission yeast) protein is Nuclear envelope protein ndc1 (cut11).